A 154-amino-acid chain; its full sequence is Large ribosomal subunit protein uL15 (154 aa).

The disordered stretch occupies residues 17–44 (KRVGRGIGSGTGKTGGRGVKGQRSRSGV). Residues 21 to 35 (RGIGSGTGKTGGRGV) show a composition bias toward gly residues.

It belongs to the universal ribosomal protein uL15 family. As to quaternary structure, part of the 50S ribosomal subunit.

Binds to the 23S rRNA. This Bartonella henselae (strain ATCC 49882 / DSM 28221 / CCUG 30454 / Houston 1) (Rochalimaea henselae) protein is Large ribosomal subunit protein uL15.